We begin with the raw amino-acid sequence, 557 residues long: Formate--tetrahydrofolate ligase (557 aa).

65–72 (SPAGEGKT) provides a ligand contact to ATP.

It belongs to the formate--tetrahydrofolate ligase family.

It catalyses the reaction (6S)-5,6,7,8-tetrahydrofolate + formate + ATP = (6R)-10-formyltetrahydrofolate + ADP + phosphate. It functions in the pathway one-carbon metabolism; tetrahydrofolate interconversion. This chain is Formate--tetrahydrofolate ligase, found in Methylobacillus flagellatus (strain ATCC 51484 / DSM 6875 / VKM B-1610 / KT).